The following is a 95-amino-acid chain: Feather keratin B-4 (95 aa).

S1 is subject to N-acetylserine.

The protein belongs to the avian keratin family. In terms of assembly, the avian keratins (F-ker, S-ker, C-ker and B-ker) are a complex mixture of very similar polypeptides.

The polypeptide is Feather keratin B-4 (Columba livia (Rock dove)).